The following is a 109-amino-acid chain: Iron-sulfur cluster assembly protein CyaY (109 aa).

The protein belongs to the frataxin family.

Involved in iron-sulfur (Fe-S) cluster assembly. May act as a regulator of Fe-S biogenesis. This chain is Iron-sulfur cluster assembly protein CyaY, found in Shewanella sp. (strain ANA-3).